The chain runs to 374 residues: Chaperone protein DnaJ (374 aa).

Positions 5 to 70 constitute a J domain; the sequence is DYYEILGVSR…QKRAAYDQYG (66 aa). A CR-type zinc finger spans residues 129–207; the sequence is GVTREIRIPT…CHGHGRVEKS (79 aa). 8 residues coordinate Zn(2+): Cys142, Cys145, Cys159, Cys162, Cys181, Cys184, Cys195, and Cys198. 4 CXXCXGXG motif repeats span residues 142–149, 159–166, 181–188, and 195–202; these read CDVCHGSG, CPTCHGQG, CPTCQGQG, and CTKCHGHG.

This sequence belongs to the DnaJ family. As to quaternary structure, homodimer. Requires Zn(2+) as cofactor.

The protein resides in the cytoplasm. Participates actively in the response to hyperosmotic and heat shock by preventing the aggregation of stress-denatured proteins and by disaggregating proteins, also in an autonomous, DnaK-independent fashion. Unfolded proteins bind initially to DnaJ; upon interaction with the DnaJ-bound protein, DnaK hydrolyzes its bound ATP, resulting in the formation of a stable complex. GrpE releases ADP from DnaK; ATP binding to DnaK triggers the release of the substrate protein, thus completing the reaction cycle. Several rounds of ATP-dependent interactions between DnaJ, DnaK and GrpE are required for fully efficient folding. Also involved, together with DnaK and GrpE, in the DNA replication of plasmids through activation of initiation proteins. The protein is Chaperone protein DnaJ of Sodalis glossinidius (strain morsitans).